We begin with the raw amino-acid sequence, 847 residues long: Phenylalanine--tRNA ligase beta subunit (847 aa).

The region spanning Phe40–Val168 is the tRNA-binding domain. The B5 domain maps to Ala426–Ser501. Asp479, Asp485, Glu488, and Glu489 together coordinate Mg(2+). An FDX-ACB domain is found at Ala753 to Arg846.

It belongs to the phenylalanyl-tRNA synthetase beta subunit family. Type 1 subfamily. As to quaternary structure, tetramer of two alpha and two beta subunits. Mg(2+) is required as a cofactor.

Its subcellular location is the cytoplasm. The enzyme catalyses tRNA(Phe) + L-phenylalanine + ATP = L-phenylalanyl-tRNA(Phe) + AMP + diphosphate + H(+). The chain is Phenylalanine--tRNA ligase beta subunit from Leifsonia xyli subsp. xyli (strain CTCB07).